A 151-amino-acid polypeptide reads, in one-letter code: Arginine repressor (151 aa).

It belongs to the ArgR family.

Its subcellular location is the cytoplasm. The protein operates within amino-acid biosynthesis; L-arginine biosynthesis [regulation]. In terms of biological role, regulates arginine biosynthesis genes. In Clostridium novyi (strain NT), this protein is Arginine repressor.